The sequence spans 203 residues: Large ribosomal subunit protein bL25 (203 aa).

This sequence belongs to the bacterial ribosomal protein bL25 family. CTC subfamily. Part of the 50S ribosomal subunit; part of the 5S rRNA/L5/L18/L25 subcomplex. Contacts the 5S rRNA. Binds to the 5S rRNA independently of L5 and L18.

In terms of biological role, this is one of the proteins that binds to the 5S RNA in the ribosome where it forms part of the central protuberance. The polypeptide is Large ribosomal subunit protein bL25 (Rickettsia africae (strain ESF-5)).